The following is a 340-amino-acid chain: Heat-inducible transcription repressor HrcA (340 aa).

The protein belongs to the HrcA family.

Functionally, negative regulator of class I heat shock genes (grpE-dnaK-dnaJ and groELS operons). Prevents heat-shock induction of these operons. The chain is Heat-inducible transcription repressor HrcA from Burkholderia thailandensis (strain ATCC 700388 / DSM 13276 / CCUG 48851 / CIP 106301 / E264).